A 258-amino-acid polypeptide reads, in one-letter code: Pimeloyl-[acyl-carrier protein] methyl ester esterase (258 aa).

In terms of domain architecture, AB hydrolase-1 spans 16–242 (LVLLHGWGLN…AAHAPFISHP (227 aa)). Substrate is bound by residues W22, 82–83 (SL), and 143–147 (FLALQ). The active-site Nucleophile is the S82. Active-site residues include D207 and H235. H235 contributes to the substrate binding site.

The protein belongs to the AB hydrolase superfamily. Carboxylesterase BioH family. In terms of assembly, monomer.

It is found in the cytoplasm. The enzyme catalyses 6-carboxyhexanoyl-[ACP] methyl ester + H2O = 6-carboxyhexanoyl-[ACP] + methanol + H(+). It functions in the pathway cofactor biosynthesis; biotin biosynthesis. Functionally, the physiological role of BioH is to remove the methyl group introduced by BioC when the pimeloyl moiety is complete. It allows to synthesize pimeloyl-ACP via the fatty acid synthetic pathway through the hydrolysis of the ester bonds of pimeloyl-ACP esters. The chain is Pimeloyl-[acyl-carrier protein] methyl ester esterase from Edwardsiella ictaluri (strain 93-146).